A 506-amino-acid chain; its full sequence is Cobyric acid synthase (506 aa).

One can recognise a GATase cobBQ-type domain in the interval Asp-254–Phe-453. The active-site Nucleophile is the Cys-334. The active site involves His-445.

The protein belongs to the CobB/CobQ family. CobQ subfamily.

It functions in the pathway cofactor biosynthesis; adenosylcobalamin biosynthesis. Functionally, catalyzes amidations at positions B, D, E, and G on adenosylcobyrinic A,C-diamide. NH(2) groups are provided by glutamine, and one molecule of ATP is hydrogenolyzed for each amidation. This is Cobyric acid synthase from Dehalococcoides mccartyi (strain ATCC BAA-2266 / KCTC 15142 / 195) (Dehalococcoides ethenogenes (strain 195)).